Here is a 678-residue protein sequence, read N- to C-terminus: UvrABC system protein C (678 aa).

The GIY-YIG domain occupies 16–95 (VEPGVYRFRD…IKEFDPRFNI (80 aa)). The UVR domain maps to 208–243 (DRLIREMEQQMTAAAEDLDFERAARLRDNIGAMRRA). The segment covering 649-667 (EAPPEPGAEAPPDSGAAAA) has biased composition (low complexity). The tract at residues 649–678 (EAPPEPGAEAPPDSGAAAAVMGNDQSRVPG) is disordered.

The protein belongs to the UvrC family. In terms of assembly, interacts with UvrB in an incision complex.

The protein localises to the cytoplasm. The UvrABC repair system catalyzes the recognition and processing of DNA lesions. UvrC both incises the 5' and 3' sides of the lesion. The N-terminal half is responsible for the 3' incision and the C-terminal half is responsible for the 5' incision. The sequence is that of UvrABC system protein C from Mycolicibacterium gilvum (strain PYR-GCK) (Mycobacterium gilvum (strain PYR-GCK)).